The primary structure comprises 645 residues: ATP-dependent zinc metalloprotease FtsH 1 (645 aa).

The Cytoplasmic portion of the chain corresponds to 1–6; it reads MRSTQK. A helical membrane pass occupies residues 7 to 27; that stretch reads TLALWFFLIIMAVFLFQAYES. Topologically, residues 28 to 110 are periplasmic; the sequence is KQQKAIADFN…NYERADNGGF (83 aa). A helical membrane pass occupies residues 111–131; sequence FQSLLVNWLPLILIVAMFLFI. The Cytoplasmic segment spans residues 132 to 645; it reads MRQIQAGGGK…PVGNTGPVTI (514 aa). 203–210 is a binding site for ATP; it reads GSPGTGKT. Histidine 425 contributes to the Zn(2+) binding site. Glutamate 426 is a catalytic residue. 2 residues coordinate Zn(2+): histidine 429 and aspartate 501.

This sequence in the central section; belongs to the AAA ATPase family. In the C-terminal section; belongs to the peptidase M41 family. Homohexamer. It depends on Zn(2+) as a cofactor.

The protein resides in the cell inner membrane. Its function is as follows. Acts as a processive, ATP-dependent zinc metallopeptidase for both cytoplasmic and membrane proteins. Plays a role in the quality control of integral membrane proteins. This is ATP-dependent zinc metalloprotease FtsH 1 from Bdellovibrio bacteriovorus (strain ATCC 15356 / DSM 50701 / NCIMB 9529 / HD100).